We begin with the raw amino-acid sequence, 169 residues long: Crossover junction endodeoxyribonuclease RuvC (169 aa).

Catalysis depends on residues Asp-11, Glu-71, and Asp-143. The Mg(2+) site is built by Asp-11, Glu-71, and Asp-143.

This sequence belongs to the RuvC family. Homodimer which binds Holliday junction (HJ) DNA. The HJ becomes 2-fold symmetrical on binding to RuvC with unstacked arms; it has a different conformation from HJ DNA in complex with RuvA. In the full resolvosome a probable DNA-RuvA(4)-RuvB(12)-RuvC(2) complex forms which resolves the HJ. Mg(2+) serves as cofactor.

Its subcellular location is the cytoplasm. The enzyme catalyses Endonucleolytic cleavage at a junction such as a reciprocal single-stranded crossover between two homologous DNA duplexes (Holliday junction).. In terms of biological role, the RuvA-RuvB-RuvC complex processes Holliday junction (HJ) DNA during genetic recombination and DNA repair. Endonuclease that resolves HJ intermediates. Cleaves cruciform DNA by making single-stranded nicks across the HJ at symmetrical positions within the homologous arms, yielding a 5'-phosphate and a 3'-hydroxyl group; requires a central core of homology in the junction. The consensus cleavage sequence is 5'-(A/T)TT(C/G)-3'. Cleavage occurs on the 3'-side of the TT dinucleotide at the point of strand exchange. HJ branch migration catalyzed by RuvA-RuvB allows RuvC to scan DNA until it finds its consensus sequence, where it cleaves and resolves the cruciform DNA. The chain is Crossover junction endodeoxyribonuclease RuvC from Rhizobium johnstonii (strain DSM 114642 / LMG 32736 / 3841) (Rhizobium leguminosarum bv. viciae).